The following is a 499-amino-acid chain: Glutathione reductase, cytosolic (499 aa).

Positions 35, 36, 55, 72, 73, and 81 each coordinate FAD. Residue serine 35 participates in glutathione binding. Cysteines 73 and 78 form a disulfide. Residue tyrosine 130 participates in glutathione binding. Glycine 146 provides a ligand contact to FAD. NADP(+) is bound by residues glycine 211, isoleucine 214, glutamate 217, arginine 234, arginine 240, and glycine 297. Positions 338 and 346 each coordinate FAD. Alanine 376 provides a ligand contact to NADP(+). Histidine 472 serves as a coordination point for FAD. Histidine 472 functions as the Proton acceptor in the catalytic mechanism.

The protein belongs to the class-I pyridine nucleotide-disulfide oxidoreductase family. As to quaternary structure, homodimer. It depends on FAD as a cofactor.

It localises to the cytoplasm. The catalysed reaction is 2 glutathione + NADP(+) = glutathione disulfide + NADPH + H(+). In terms of biological role, catalyzes the reduction of glutathione disulfide (GSSG) to reduced glutathione (GSH). Constitutes the major mechanism to maintain a high GSH:GSSG ratio in the cytosol. This Arabidopsis thaliana (Mouse-ear cress) protein is Glutathione reductase, cytosolic.